A 184-amino-acid polypeptide reads, in one-letter code: Bacterial microcompartment shell protein PduT (184 aa).

BMC domains lie at 4–86 (AIGI…PAIS) and 96–182 (AVGI…RQMV). Cysteine 38 is a binding site for [4Fe-4S] cluster.

Belongs to the bacterial microcompartments protein family. Homotrimerizes to form a pseudohexamer with a large central pore, which is probably the binding site for the [4Fe-4S] center. Interacts with PduS. Originally suggested to be a homotetramer; this is incorrect. [4Fe-4S] cluster is required as a cofactor.

Its subcellular location is the bacterial microcompartment. Its pathway is polyol metabolism; 1,2-propanediol degradation. A minor shell protein of the bacterial microcompartment (BMC) dedicated to 1,2-propanediol (1,2-PD) degradation. Overexpression of this protein leads to cells with either deposits or having lamina-like structures in the cytoplasm. Not absolutely required to make artificial BMCs. May selectively transport specific metabolites. Its function is as follows. Expression of a cosmid containing the full 21-gene pdu operon in E.coli allows E.coli to grow on 1,2-propanediol (1,2-PD) with the appearance of bacterial microcompartments (BMC) in its cytoplasm. In terms of biological role, the 1,2-PD-specific bacterial microcompartment (BMC) concentrates low levels of 1,2-PD catabolic enzymes, concentrates volatile reaction intermediates thus enhancing pathway flux and keeps the level of toxic, mutagenic propionaldehyde low. The sequence is that of Bacterial microcompartment shell protein PduT from Citrobacter freundii.